The primary structure comprises 611 residues: MSHYRSNVRDQVFNLFEVLGVDKALGHGEFSDVDVDTARDMLAEVSRLAEGPVAESFVEGDRNPPVFDPKTHSVMLPESFKKSVNAMLEAGWDKVGIDEALGGMPMPKAVVWALHEHILGANPAVWMYAGGAGFAQILYHLGTEEQKKWAVLAAERGWGSTMVLTEPDAGSDVGAARTKAVQQADGSWHIDGVKRFITSGDSGDLFENIFHLVLARPEGAGPGTKGLSLYFVPKFLFDVETGEPGERNGVFVTNVEHKMGLKVSATCELAFGQHGVPAKGWLVGEVHNGIAQMFEVIEQARMMVGTKAIATLSTGYLNALQYAKSRVQGADLTQMTDKTAPRVTITHHPDVRRSLMTQKAYAEGLRALYLYTATFQDAAVAEVVHGVDAKLAVKVNDLMLPVVKGVGSEQAYAKLTESLQTLGGSGFLQDYPIEQYIRDAKIDSLYEGTTAIQAQDFFFRKIVRDKGVALAHVSGQIQEFVDSGAGNGRLKTERALLAKALTDVQGMAAALTGYLMAAQQDVTSLYKVGLGSVRFLMSVGDLIIGWLLQRQAAVAVAALDAGATGDERSFYEGKVAVASFFAKNFLPLLTSTREVIETLDNDIMELDEAAF.

Residues 162 to 165, S171, and T198 contribute to the FAD site; that span reads MVLT. S171 is an a 2,3-saturated acyl-CoA binding site. Residues 224 to 225 and R301 contribute to the a 2,3-saturated acyl-CoA site; that span reads TK. R326 contacts FAD. K338 is an a 2,3-saturated acyl-CoA binding site. Residue 420–424 coordinates FAD; that stretch reads QTLGG. E447 contacts a 2,3-saturated acyl-CoA. The active-site Proton acceptor is the E447. T449 contacts FAD. A 2,3-saturated acyl-CoA is bound by residues D456 and 460-461; that span reads RK.

It belongs to the acyl-CoA dehydrogenase family. In terms of assembly, homodimer. FAD serves as cofactor.

It carries out the reaction a long-chain 2,3-saturated fatty acyl-CoA + oxidized [electron-transfer flavoprotein] + H(+) = a long-chain (2E)-enoyl-CoA + reduced [electron-transfer flavoprotein]. It catalyses the reaction a medium-chain 2,3-saturated fatty acyl-CoA + oxidized [electron-transfer flavoprotein] + H(+) = a medium-chain (2E)-enoyl-CoA + reduced [electron-transfer flavoprotein]. The catalysed reaction is a short-chain 2,3-saturated fatty acyl-CoA + oxidized [electron-transfer flavoprotein] + H(+) = a short-chain (2E)-enoyl-CoA + reduced [electron-transfer flavoprotein]. The enzyme catalyses octadecanoyl-CoA + oxidized [electron-transfer flavoprotein] + H(+) = (2E)-octadecenoyl-CoA + reduced [electron-transfer flavoprotein]. It carries out the reaction oxidized [electron-transfer flavoprotein] + hexadecanoyl-CoA + H(+) = (2E)-hexadecenoyl-CoA + reduced [electron-transfer flavoprotein]. It catalyses the reaction dodecanoyl-CoA + oxidized [electron-transfer flavoprotein] + H(+) = (2E)-dodecenoyl-CoA + reduced [electron-transfer flavoprotein]. The catalysed reaction is decanoyl-CoA + oxidized [electron-transfer flavoprotein] + H(+) = (2E)-decenoyl-CoA + reduced [electron-transfer flavoprotein]. The enzyme catalyses hexanoyl-CoA + oxidized [electron-transfer flavoprotein] + H(+) = (2E)-hexenoyl-CoA + reduced [electron-transfer flavoprotein]. It carries out the reaction butanoyl-CoA + oxidized [electron-transfer flavoprotein] + H(+) = (2E)-butenoyl-CoA + reduced [electron-transfer flavoprotein]. It participates in lipid metabolism; fatty acid metabolism. Functionally, acyl-CoA dehydrogenase that exhibits broad specificity for linear acyl-CoA substrates, with a preference for long-chain substrates. The chain is Broad-specificity linear acyl-CoA dehydrogenase FadE5 from Mycobacterium tuberculosis (strain ATCC 25618 / H37Rv).